The chain runs to 213 residues: ATP phosphoribosyltransferase (213 aa).

This sequence belongs to the ATP phosphoribosyltransferase family. Short subfamily. In terms of assembly, heteromultimer composed of HisG and HisZ subunits.

It localises to the cytoplasm. It carries out the reaction 1-(5-phospho-beta-D-ribosyl)-ATP + diphosphate = 5-phospho-alpha-D-ribose 1-diphosphate + ATP. The protein operates within amino-acid biosynthesis; L-histidine biosynthesis; L-histidine from 5-phospho-alpha-D-ribose 1-diphosphate: step 1/9. Functionally, catalyzes the condensation of ATP and 5-phosphoribose 1-diphosphate to form N'-(5'-phosphoribosyl)-ATP (PR-ATP). Has a crucial role in the pathway because the rate of histidine biosynthesis seems to be controlled primarily by regulation of HisG enzymatic activity. The polypeptide is ATP phosphoribosyltransferase (Chromobacterium violaceum (strain ATCC 12472 / DSM 30191 / JCM 1249 / CCUG 213 / NBRC 12614 / NCIMB 9131 / NCTC 9757 / MK)).